The primary structure comprises 296 residues: Acetylglutamate kinase (296 aa).

Substrate contacts are provided by residues 69–70 (GG), arginine 91, and asparagine 192.

The protein belongs to the acetylglutamate kinase family. ArgB subfamily.

Its subcellular location is the cytoplasm. The catalysed reaction is N-acetyl-L-glutamate + ATP = N-acetyl-L-glutamyl 5-phosphate + ADP. It participates in amino-acid biosynthesis; L-arginine biosynthesis; N(2)-acetyl-L-ornithine from L-glutamate: step 2/4. Catalyzes the ATP-dependent phosphorylation of N-acetyl-L-glutamate. In Ruthia magnifica subsp. Calyptogena magnifica, this protein is Acetylglutamate kinase.